The primary structure comprises 305 residues: Protoheme IX farnesyltransferase (305 aa).

9 helical membrane passes run 31-51, 52-72, 96-118, 122-144, 151-171, 180-200, 225-245, 247-267, and 281-301; these read VMSL…YSVH, PFIA…AGAI, VIES…FFMA, NLLA…TIWL, NIVI…AAVS, ILFL…ALFC, ILIY…IGMN, FIYL…AGSL, and FAYS…TNTI.

Belongs to the UbiA prenyltransferase family. Protoheme IX farnesyltransferase subfamily.

The protein resides in the cell inner membrane. It catalyses the reaction heme b + (2E,6E)-farnesyl diphosphate + H2O = Fe(II)-heme o + diphosphate. It participates in porphyrin-containing compound metabolism; heme O biosynthesis; heme O from protoheme: step 1/1. Converts heme B (protoheme IX) to heme O by substitution of the vinyl group on carbon 2 of heme B porphyrin ring with a hydroxyethyl farnesyl side group. The sequence is that of Protoheme IX farnesyltransferase from Rickettsia peacockii (strain Rustic).